The following is a 152-amino-acid chain: Snaclec anticoagulant protein subunit A (152 aa).

An N-terminal signal peptide occupies residues 1-23 (MGRFIFVSFGLLVVYLSLSGTAA). The 129-residue stretch at 24–152 (DCSSSWSSYE…EQRDPFVCEA (129 aa)) folds into the C-type lectin domain. 3 disulfides stabilise this stretch: Cys-25/Cys-36, Cys-53/Cys-150, and Cys-125/Cys-142. The Ca(2+) site is built by Ser-64, Glu-66, and Glu-70. Glu-151 lines the Ca(2+) pocket.

This sequence belongs to the snaclec family. Heterodimer of subunits A and B; disulfide-linked. Expressed by the venom gland.

It localises to the secreted. Its function is as follows. Anticoagulant protein which binds to the gamma-carboxyglutamic acid-domain regions of factors IX and factor X in the presence of calcium with a 1 to 1 stoichiometry. Also inhibits platelet aggregation by binding to platelet glycoprotein Ibalpha (GP1BA) and functioning as a blocker of vWF. Is devoid of hemorrhagic and lethal activities. Possesses antithrombotic and thrombolytic activities. Also hydrolyzes the Aalpha-chain of fibrinogen. Does not affect the Bbeta-chain and the gamma chain. This Deinagkistrodon acutus (Hundred-pace snake) protein is Snaclec anticoagulant protein subunit A.